A 139-amino-acid polypeptide reads, in one-letter code: Plastocyanin (139 aa).

The N-terminal stretch at 1–34 (MKLISASLRRFSLAVLTILLVVSSFAVFTPSASA) is a signal peptide. Residues 35 to 139 (ETYQVKLGTD…GMVGTITVQG (105 aa)) form the Plastocyanin-like domain. Histidine 73, cysteine 123, histidine 126, and methionine 131 together coordinate Cu cation.

The protein belongs to the plastocyanin family. Cu(2+) serves as cofactor.

It is found in the cellular thylakoid membrane. Functionally, participates in electron transfer between P700 and the cytochrome b6-f complex in photosystem I. In Nostoc punctiforme (strain ATCC 29133 / PCC 73102), this protein is Plastocyanin.